The chain runs to 346 residues: Phenylalanine--tRNA ligase alpha subunit (346 aa).

Glu-264 provides a ligand contact to Mg(2+).

This sequence belongs to the class-II aminoacyl-tRNA synthetase family. Phe-tRNA synthetase alpha subunit type 1 subfamily. Tetramer of two alpha and two beta subunits. Mg(2+) serves as cofactor.

It is found in the cytoplasm. It carries out the reaction tRNA(Phe) + L-phenylalanine + ATP = L-phenylalanyl-tRNA(Phe) + AMP + diphosphate + H(+). The chain is Phenylalanine--tRNA ligase alpha subunit from Leifsonia xyli subsp. xyli (strain CTCB07).